A 311-amino-acid polypeptide reads, in one-letter code: Putative S-adenosyl-L-methionine-dependent methyltransferase MSMEG_0095/MSMEI_0092 (311 aa).

S-adenosyl-L-methionine-binding positions include D134 and 163–164 (DL).

Belongs to the UPF0677 family.

Exhibits S-adenosyl-L-methionine-dependent methyltransferase activity. This chain is Putative S-adenosyl-L-methionine-dependent methyltransferase MSMEG_0095/MSMEI_0092, found in Mycolicibacterium smegmatis (strain ATCC 700084 / mc(2)155) (Mycobacterium smegmatis).